A 438-amino-acid polypeptide reads, in one-letter code: GTPase Der (438 aa).

2 EngA-type G domains span residues 4-168 (PLVT…KSEG) and 177-352 (IKIA…DNYS). Residues 10–17 (GRPNVGKS), 57–61 (DTGGI), 120–123 (NKID), 183–190 (GKPNVGKS), 230–234 (DTAGL), and 295–298 (NKWD) contribute to the GTP site. The region spanning 353-437 (KRIATGVLND…GIKMIFKERK (85 aa)) is the KH-like domain.

Belongs to the TRAFAC class TrmE-Era-EngA-EngB-Septin-like GTPase superfamily. EngA (Der) GTPase family. In terms of assembly, associates with the 50S ribosomal subunit.

Its function is as follows. GTPase that plays an essential role in the late steps of ribosome biogenesis. This is GTPase Der from Clostridium acetobutylicum (strain ATCC 824 / DSM 792 / JCM 1419 / IAM 19013 / LMG 5710 / NBRC 13948 / NRRL B-527 / VKM B-1787 / 2291 / W).